Consider the following 205-residue polypeptide: MAVVDIKNMNGETVSQAELPDSIFDVEVKSSVLHEVVKMQLARRRSGTASTKGRSDVAGSRAKLFRQKGTGRARRGDVKSPLLKGGGVVFGPHPRSFDYSVPKKVRKLALKMALTSKLRDNTLTVVDQFRFDRIKTKDFVGAINALGAANALVISDGSETLEKSARNVPKVKVLKCEGLNVYDILKYKNLVLPEAAIKMIEGRLL.

The interval 43–77 (RRRSGTASTKGRSDVAGSRAKLFRQKGTGRARRGD) is disordered. The segment covering 63–73 (KLFRQKGTGRA) has biased composition (basic residues).

It belongs to the universal ribosomal protein uL4 family. As to quaternary structure, part of the 50S ribosomal subunit.

Functionally, one of the primary rRNA binding proteins, this protein initially binds near the 5'-end of the 23S rRNA. It is important during the early stages of 50S assembly. It makes multiple contacts with different domains of the 23S rRNA in the assembled 50S subunit and ribosome. Forms part of the polypeptide exit tunnel. The sequence is that of Large ribosomal subunit protein uL4 from Desulfosudis oleivorans (strain DSM 6200 / JCM 39069 / Hxd3) (Desulfococcus oleovorans).